We begin with the raw amino-acid sequence, 153 residues long: MNVGTAHSEVNPNTRVMNSRGIWLSYVLAIGLLHVVLLSIPFVSVPVVWTLTNLIHNMGMYIFLHTVKGTPFETPDQGKARLLTHWEQMDYGVQFTASRKFLTITPIVLYFLTSFYTKYDQIHFILNTVSLMSVLIPKLPQLHGVRIFGINKY.

The segment at 1 to 17 (MNVGTAHSEVNPNTRVM) is important for ceramide level-sensing. Residues 1–21 (MNVGTAHSEVNPNTRVMNSRG) are Cytoplasmic-facing. The next 2 membrane-spanning stretches (helical) occupy residues 22-42 (IWLS…SIPF) and 43-63 (VSVP…MYIF). Topologically, residues 64-94 (LHTVKGTPFETPDQGKARLLTHWEQMDYGVQ) are cytoplasmic. A helical transmembrane segment spans residues 95–117 (FTASRKFLTITPIVLYFLTSFYT). Over 118-121 (KYDQ) the chain is Extracellular. The chain crosses the membrane as a helical span at residues 122–142 (IHFILNTVSLMSVLIPKLPQL). At proline 137 the chain carries Hydroxyproline. Topologically, residues 143-153 (HGVRIFGINKY) are cytoplasmic.

Belongs to the ORM family. Ceramide-sensitive subunit of the serine palmitoyltransferase (SPT) complex, which is also composed of SPTLC1, SPTLC2/3 and SPTSSA/B. In terms of processing, when hydroxylated at Pro-137, ubiquitinated via 'Lys-48'-linkage, leading to proteasomal degradation. In endothelial cells, ORMDL3 proteasomal degradation is controlled by the sphingosine 1-phosphate receptor signaling pathway.

It is found in the endoplasmic reticulum membrane. Plays an essential role in the homeostatic regulation of sphingolipid de novo biosynthesis by modulating the activity of the serine palmitoyltransferase (SPT) in response to ceramide levels. When complexed to SPT, the binding of ceramides to its N-terminus stabilizes a conformation that block SPT substrate entry, hence preventing SPT catalytic activity. Through this mechanism, maintains ceramide levels at sufficient concentrations for the production of complex sphingolipids, but which prevents the accumulation of ceramides to levels that trigger apoptosis. This chain is ORM1-like protein 3 (ORMDL3), found in Bos taurus (Bovine).